A 726-amino-acid polypeptide reads, in one-letter code: Endo-1,4-beta-xylanase/feruloyl esterase (726 aa).

Positions 1–19 are cleaved as a signal peptide; the sequence is MKKLLVALSLIAGSLTASA. Residues 27 to 369 enclose the GH10 domain; the sequence is YAAGPGLKDA…KRSLQIIRDF (343 aa). Glu161 (proton donor; for xylanase activity) is an active-site residue. Glu280 functions as the Nucleophile; for xylanase activity in the catalytic mechanism. The tract at residues 370–726 is feruloyl esterase; that stretch reads DAAMDNRKPK…LEKMAQSLFK (357 aa). Ser629 (nucleophile; for esterase activity) is an active-site residue.

In the N-terminal section; belongs to the glycosyl hydrolase 10 (cellulase F) family. In terms of assembly, monomer or homodimer.

The enzyme catalyses Endohydrolysis of (1-&gt;4)-beta-D-xylosidic linkages in xylans.. It carries out the reaction feruloyl-polysaccharide + H2O = ferulate + polysaccharide.. Its pathway is glycan degradation; xylan degradation. Its function is as follows. Involved in degradation of plant cell wall polysaccharides. Has endo-xylanase activity towards substrates such as oat spelt xylan (OSX), acetylated xylo-oligosaccharides and acetylated xylan, producing primarily xylobiose; cannot hydrolyze xylobiose to xylose. Also has feruloyl esterase activity, releasing ferulic acid from methylferulate, and from the more natural substrates wheat bran, corn fiber, and XOS(FA,Ac), a corn fiber-derived substrate enriched in O-acetyl and ferulic acid esters. Exhibits negligible acetyl esterase activity on sugar acetates. Acts synergistically with Xyl3A to increase the release of xylose from xylan. Does not possess endoglucanase or mannanase activities since it is not able to hydrolyze carboxymethyl cellulose and locust bean gum. This Xylanibacter ruminicola (strain ATCC 19189 / DSM 19721 / CIP 105475 / JCM 8958 / 23) (Prevotella ruminicola) protein is Endo-1,4-beta-xylanase/feruloyl esterase.